Here is a 364-residue protein sequence, read N- to C-terminus: Aminomethyltransferase (364 aa).

The protein belongs to the GcvT family. The glycine cleavage system is composed of four proteins: P, T, L and H.

The enzyme catalyses N(6)-[(R)-S(8)-aminomethyldihydrolipoyl]-L-lysyl-[protein] + (6S)-5,6,7,8-tetrahydrofolate = N(6)-[(R)-dihydrolipoyl]-L-lysyl-[protein] + (6R)-5,10-methylene-5,6,7,8-tetrahydrofolate + NH4(+). Its function is as follows. The glycine cleavage system catalyzes the degradation of glycine. The protein is Aminomethyltransferase of Escherichia coli O6:H1 (strain CFT073 / ATCC 700928 / UPEC).